We begin with the raw amino-acid sequence, 1179 residues long: ATP-dependent helicase/deoxyribonuclease subunit B (1179 aa).

Belongs to the helicase family. AddB/RexB type 2 subfamily. In terms of assembly, heterodimer of AddA and RexB. Requires Mg(2+) as cofactor.

The heterodimer acts as both an ATP-dependent DNA helicase and an ATP-dependent, dual-direction single-stranded exonuclease. Recognizes the chi site generating a DNA molecule suitable for the initiation of homologous recombination. This subunit has 5' -&gt; 3' nuclease activity but not helicase activity. The polypeptide is ATP-dependent helicase/deoxyribonuclease subunit B (Lacticaseibacillus paracasei (strain ATCC 334 / BCRC 17002 / CCUG 31169 / CIP 107868 / KCTC 3260 / NRRL B-441) (Lactobacillus paracasei)).